Consider the following 472-residue polypeptide: 2-oxoisovalerate dehydrogenase subunit alpha 1, mitochondrial (472 aa).

The N-terminal 56 residues, 1–56, are a transit peptide targeting the mitochondrion; sequence MAIWFARSKTLVSSLRHNLNLSTILIKRDYSHRPIFYTTSQLSSTAYLSPFGSLRH. Residue 185 to 187 participates in thiamine diphosphate binding; sequence QYR. 3 residues coordinate K(+): Ser234, Thr239, and Gln240.

The protein belongs to the BCKDHA family. As to quaternary structure, heterotetramer of alpha and beta chains. Thiamine diphosphate is required as a cofactor.

The protein localises to the mitochondrion matrix. The catalysed reaction is N(6)-[(R)-lipoyl]-L-lysyl-[protein] + 3-methyl-2-oxobutanoate + H(+) = N(6)-[(R)-S(8)-2-methylpropanoyldihydrolipoyl]-L-lysyl-[protein] + CO2. Its function is as follows. The branched-chain alpha-keto dehydrogenase complex catalyzes the overall conversion of alpha-keto acids to acyl-CoA and CO(2). It contains multiple copies of three enzymatic components: branched-chain alpha-keto acid decarboxylase (E1), lipoamide acyltransferase (E2) and lipoamide dehydrogenase (E3). Required during sugar starvation. In Arabidopsis thaliana (Mouse-ear cress), this protein is 2-oxoisovalerate dehydrogenase subunit alpha 1, mitochondrial.